Here is a 287-residue protein sequence, read N- to C-terminus: Large ribosomal subunit protein uL2 (287 aa).

The segment at 221–287 (RGSVMNPCDH…SKRSRGGRDS (67 aa)) is disordered. Basic residues predominate over residues 271–287 (LRKRRKTSKRSRGGRDS).

The protein belongs to the universal ribosomal protein uL2 family. Part of the 50S ribosomal subunit. Forms a bridge to the 30S subunit in the 70S ribosome.

Functionally, one of the primary rRNA binding proteins. Required for association of the 30S and 50S subunits to form the 70S ribosome, for tRNA binding and peptide bond formation. It has been suggested to have peptidyltransferase activity; this is somewhat controversial. Makes several contacts with the 16S rRNA in the 70S ribosome. This chain is Large ribosomal subunit protein uL2, found in Synechococcus sp. (strain CC9902).